The sequence spans 284 residues: Bifunctional protein FolD (284 aa).

Residues 166–168 (GAS) and Ile-232 contribute to the NADP(+) site.

The protein belongs to the tetrahydrofolate dehydrogenase/cyclohydrolase family. Homodimer.

The catalysed reaction is (6R)-5,10-methylene-5,6,7,8-tetrahydrofolate + NADP(+) = (6R)-5,10-methenyltetrahydrofolate + NADPH. It carries out the reaction (6R)-5,10-methenyltetrahydrofolate + H2O = (6R)-10-formyltetrahydrofolate + H(+). It functions in the pathway one-carbon metabolism; tetrahydrofolate interconversion. Functionally, catalyzes the oxidation of 5,10-methylenetetrahydrofolate to 5,10-methenyltetrahydrofolate and then the hydrolysis of 5,10-methenyltetrahydrofolate to 10-formyltetrahydrofolate. This Shewanella pealeana (strain ATCC 700345 / ANG-SQ1) protein is Bifunctional protein FolD.